The primary structure comprises 227 residues: Gamma-glutamyl-hercynylcysteine sulfoxide hydrolase (227 aa).

The Nucleophile role is filled by Cys2. The region spanning 2–227 (CRHVAWLGAP…RDAHVVVTPL (226 aa)) is the Glutamine amidotransferase type-2 domain.

It catalyses the reaction gamma-L-glutamyl-hercynylcysteine S-oxide + H2O = S-(hercyn-2-yl)-L-cysteine S-oxide + L-glutamate. It functions in the pathway amino-acid biosynthesis; ergothioneine biosynthesis. Functionally, catalyzes the hydrolysis of the gamma-glutamyl amide bond of hercynyl-gamma-L-glutamyl-L-cysteine sulfoxide to produce hercynylcysteine sulfoxide, a step in the biosynthesis pathway of ergothioneine. The chain is Gamma-glutamyl-hercynylcysteine sulfoxide hydrolase from Mycolicibacterium smegmatis (strain ATCC 700084 / mc(2)155) (Mycobacterium smegmatis).